A 321-amino-acid polypeptide reads, in one-letter code: Acetylglutamate kinase (321 aa).

Substrate contacts are provided by residues Gly88–Gly89, Arg110, and Asn216.

This sequence belongs to the acetylglutamate kinase family. ArgB subfamily.

The protein resides in the cytoplasm. It carries out the reaction N-acetyl-L-glutamate + ATP = N-acetyl-L-glutamyl 5-phosphate + ADP. The protein operates within amino-acid biosynthesis; L-arginine biosynthesis; N(2)-acetyl-L-ornithine from L-glutamate: step 2/4. Its function is as follows. Catalyzes the ATP-dependent phosphorylation of N-acetyl-L-glutamate. The chain is Acetylglutamate kinase from Ehrlichia chaffeensis (strain ATCC CRL-10679 / Arkansas).